Reading from the N-terminus, the 442-residue chain is Tubulin beta chain (442 aa).

Positions 11, 69, 138, 142, 143, 144, 204, and 226 each coordinate GTP. Position 69 (E69) interacts with Mg(2+).

This sequence belongs to the tubulin family. As to quaternary structure, dimer of alpha and beta chains. A typical microtubule is a hollow water-filled tube with an outer diameter of 25 nm and an inner diameter of 15 nM. Alpha-beta heterodimers associate head-to-tail to form protofilaments running lengthwise along the microtubule wall with the beta-tubulin subunit facing the microtubule plus end conferring a structural polarity. Microtubules usually have 13 protofilaments but different protofilament numbers can be found in some organisms and specialized cells. Requires Mg(2+) as cofactor.

It localises to the cytoplasm. It is found in the cytoskeleton. Its function is as follows. Tubulin is the major constituent of microtubules, a cylinder consisting of laterally associated linear protofilaments composed of alpha- and beta-tubulin heterodimers. Microtubules grow by the addition of GTP-tubulin dimers to the microtubule end, where a stabilizing cap forms. Below the cap, tubulin dimers are in GDP-bound state, owing to GTPase activity of alpha-tubulin. The polypeptide is Tubulin beta chain (Trypanosoma cruzi).